The chain runs to 451 residues: Cindoxin reductase (451 aa).

4 residues coordinate FAD: alanine 24, glutamate 45, leucine 53, and valine 89. NADP(+) is bound by residues 157–160 and 197–198; these read NGNV and RS. Residues tryptophan 338 and 345 to 347 each bind FAD; that span reads GGI. Glycine 345 is a binding site for NADP(+).

The protein belongs to the ferredoxin--NADP reductase type 1 family. Requires FAD as cofactor.

Involved in the degradation of cineol (eucalyptol). Catalyzes the reduction of cindoxin (CinC). In Citrobacter braakii, this protein is Cindoxin reductase (cinB).